The following is a 188-amino-acid chain: Probable nicotinate-nucleotide adenylyltransferase (188 aa).

It belongs to the NadD family.

It catalyses the reaction nicotinate beta-D-ribonucleotide + ATP + H(+) = deamido-NAD(+) + diphosphate. Its pathway is cofactor biosynthesis; NAD(+) biosynthesis; deamido-NAD(+) from nicotinate D-ribonucleotide: step 1/1. Functionally, catalyzes the reversible adenylation of nicotinate mononucleotide (NaMN) to nicotinic acid adenine dinucleotide (NaAD). In Sulfurovum sp. (strain NBC37-1), this protein is Probable nicotinate-nucleotide adenylyltransferase.